The following is a 295-amino-acid chain: MPWIQIKLNATNDNAEAIGDMLMEETGAVSVTFLDAKDTPVFEPLPGETRLWGDTDVVALYEADMDTSLILQQIKASNMLAEGFAHKVEQVEDKDWEREWMDNFHPMQFGRRLWICPSWREVPDPQAVNVMLDPGLAFGTGTHPTTALCLEWLDNLDLTGKTVIDFGCGSGILAIAAIKLGAAKVIGIDIDPQALLASKDNAARNGVEDQIEVYLPKDQPEGLVADVVVANILAGPLRELSPIIKGLLKPGGQLAMSGILDTQAESVAEFYRDDLELDPIAEKSEWCRISGRKLG.

Residues T146, G167, D189, and N231 each coordinate S-adenosyl-L-methionine.

The protein belongs to the methyltransferase superfamily. PrmA family.

The protein resides in the cytoplasm. It catalyses the reaction L-lysyl-[protein] + 3 S-adenosyl-L-methionine = N(6),N(6),N(6)-trimethyl-L-lysyl-[protein] + 3 S-adenosyl-L-homocysteine + 3 H(+). Functionally, methylates ribosomal protein L11. The chain is Ribosomal protein L11 methyltransferase from Vibrio cholerae serotype O1 (strain M66-2).